A 485-amino-acid chain; its full sequence is uncharacterized protein (485 aa).

Helical transmembrane passes span 284–304 (LLAL…YPLF), 328–348 (LLDL…SFIK), and 353–373 (LALT…YNCL).

It belongs to the CBF/MAK21 family.

Its subcellular location is the membrane. This is an uncharacterized protein from Schizosaccharomyces pombe (strain 972 / ATCC 24843) (Fission yeast).